A 200-amino-acid chain; its full sequence is NAD(P)H dehydrogenase (quinone) (200 aa).

A Flavodoxin-like domain is found at 4-191 (LLVLYYSMYG…TIARFQGEHV (188 aa)). FMN is bound by residues 10-15 (SMYGHV) and 79-81 (TRF). Residue Y12 participates in NAD(+) binding. A substrate-binding site is contributed by W99. FMN-binding positions include 114–120 (STASQHG) and H135.

This sequence belongs to the WrbA family. It depends on FMN as a cofactor.

The catalysed reaction is a quinone + NADH + H(+) = a quinol + NAD(+). The enzyme catalyses a quinone + NADPH + H(+) = a quinol + NADP(+). This is NAD(P)H dehydrogenase (quinone) from Nitrosococcus oceani (strain ATCC 19707 / BCRC 17464 / JCM 30415 / NCIMB 11848 / C-107).